The following is a 293-amino-acid chain: Pseudouridine-5'-phosphate glycosidase (293 aa).

The Proton donor role is filled by E21. Residues K81 and V101 each contribute to the substrate site. D130 contributes to the Mn(2+) binding site. A substrate-binding site is contributed by 132–134 (SQD). The Nucleophile role is filled by K151.

The protein belongs to the pseudouridine-5'-phosphate glycosidase family. In terms of assembly, homotrimer. It depends on Mn(2+) as a cofactor.

The enzyme catalyses D-ribose 5-phosphate + uracil = psi-UMP + H2O. Functionally, catalyzes the reversible cleavage of pseudouridine 5'-phosphate (PsiMP) to ribose 5-phosphate and uracil. Functions biologically in the cleavage direction, as part of a pseudouridine degradation pathway. The chain is Pseudouridine-5'-phosphate glycosidase from Thermosipho africanus (strain TCF52B).